A 204-amino-acid polypeptide reads, in one-letter code: 3-isopropylmalate dehydratase small subunit (204 aa).

The protein belongs to the LeuD family. LeuD type 1 subfamily. As to quaternary structure, heterodimer of LeuC and LeuD.

The enzyme catalyses (2R,3S)-3-isopropylmalate = (2S)-2-isopropylmalate. Its pathway is amino-acid biosynthesis; L-leucine biosynthesis; L-leucine from 3-methyl-2-oxobutanoate: step 2/4. In terms of biological role, catalyzes the isomerization between 2-isopropylmalate and 3-isopropylmalate, via the formation of 2-isopropylmaleate. This chain is 3-isopropylmalate dehydratase small subunit, found in Roseiflexus sp. (strain RS-1).